The following is an 870-amino-acid chain: Radial spoke head 10 homolog B2 (870 aa).

Positions 1-16 are enriched in basic and acidic residues; it reads MVKEKKKADKKGEKSA. The segment at 1 to 44 is disordered; the sequence is MVKEKKKADKKGEKSARSPSSLSDNLDFSKQDGNTTRQEMSPAG. Residues 17 to 39 show a composition bias toward polar residues; the sequence is RSPSSLSDNLDFSKQDGNTTRQE. MORN repeat units follow at residues 86–108, 109–131, 132–154, 155–177, 179–201, 204–226, 227–249, 251–273, 284–306, and 307–329; these read YEGEKVRGLYEGEGFAAFQGGCT, YRGMFSEGLMHGQGTYIWADGLK, YEGDFVKNVPMNHGVYTWPDGSM, YEGEVVNGMRNGFGMFKCSTQPV, YIGHWCNGKRHGKGSIYYNQEGT, YEGDWVQNIKKGWGIRCYKSGNI, YEGQWEDNMRHGEGRMRWLTTNE, YTGRWERGIQNGFGTHTWFLKRI, YIGEFVNGYRHGRGKFYYASGAM, and YDGEWVSNKKHGMGRLTFKNGRV. A disordered region spans residues 674–704; the sequence is NKSPSAVMSHESDAAHSDSARSSSSKLELSP. Positions 683–692 are enriched in basic and acidic residues; it reads HESDAAHSDS. Positions 693 to 703 are enriched in low complexity; sequence ARSSSSKLELS. Residues 784 to 811 are a coiled coil; sequence KEKIRADRLRSTAQAQQRKMEDDELEAR. The disordered stretch occupies residues 840 to 870; that stretch reads VSSSHLILDPPKEDVTVSPSSKTITSKKKKK.

In terms of assembly, interacts with RSPH6A. Does not appear to be part of the axonemal radial spoke complexes 1 or 2.

Its subcellular location is the cytoplasm. It localises to the cytoskeleton. The protein resides in the cilium axoneme. It is found in the cell projection. The protein localises to the cilium. Its subcellular location is the flagellum. May function as part of the axonemal radial spoke complex 3 (RS3). Radial spoke complexes are important for ciliary motility. The chain is Radial spoke head 10 homolog B2 (RSPH10B2) from Homo sapiens (Human).